Reading from the N-terminus, the 155-residue chain is UPF0225 protein PC1_1977 (155 aa).

This sequence belongs to the UPF0225 family.

The protein is UPF0225 protein PC1_1977 of Pectobacterium carotovorum subsp. carotovorum (strain PC1).